The chain runs to 252 residues: N-acetylglucosaminyl-phosphatidylinositol de-N-acetylase (252 aa).

The chain crosses the membrane as a helical span at residues 2-22 (EVVGLLCVAVAVLTWGFLRVW). Residues 23 to 252 (NSAERMRSPE…YMSVNSLQLL (230 aa)) are Cytoplasmic-facing.

It belongs to the PIGL family.

Its subcellular location is the endoplasmic reticulum membrane. The enzyme catalyses a 6-(N-acetyl-alpha-D-glucosaminyl)-1-(1,2-diacyl-sn-glycero-3-phospho)-1D-myo-inositol + H2O = a 6-(alpha-D-glucosaminyl)-1-(1,2-diacyl-sn-glycero-3-phospho)-1D-myo-inositol + acetate. It functions in the pathway glycolipid biosynthesis; glycosylphosphatidylinositol-anchor biosynthesis. Catalyzes the second step of glycosylphosphatidylinositol (GPI) biosynthesis, which is the de-N-acetylation of N-acetylglucosaminyl-phosphatidylinositol. The chain is N-acetylglucosaminyl-phosphatidylinositol de-N-acetylase (Pigl) from Rattus norvegicus (Rat).